Consider the following 173-residue polypeptide: Dual-action ribosomal maturation protein DarP (173 aa).

This sequence belongs to the DarP family.

It localises to the cytoplasm. Its function is as follows. Member of a network of 50S ribosomal subunit biogenesis factors which assembles along the 30S-50S interface, preventing incorrect 23S rRNA structures from forming. Promotes peptidyl transferase center (PTC) maturation. The chain is Dual-action ribosomal maturation protein DarP from Pseudomonas putida (strain W619).